The sequence spans 252 residues: Ubiquinone biosynthesis protein COQ4 homolog 2, mitochondrial (252 aa).

Residues H130, D131, H134, and E146 each coordinate Zn(2+).

This sequence belongs to the COQ4 family. Component of a multi-subunit COQ enzyme complex. It depends on Zn(2+) as a cofactor.

Its subcellular location is the mitochondrion inner membrane. It catalyses the reaction a 4-hydroxy-3-methoxy-5-(all-trans-polyprenyl)benzoate + H(+) = a 2-methoxy-6-(all-trans-polyprenyl)phenol + CO2. It participates in cofactor biosynthesis; ubiquinone biosynthesis. In terms of biological role, lyase that catalyzes the C1-decarboxylation of 4-hydroxy-3-methoxy-5-(all-trans-polyprenyl)benzoic acid into 2-methoxy-6-(all-trans-polyprenyl)phenol during ubiquinone biosynthesis. The chain is Ubiquinone biosynthesis protein COQ4 homolog 2, mitochondrial from Trypanosoma cruzi (strain CL Brener).